The sequence spans 340 residues: Photosystem II assembly lipoprotein Ycf48 (340 aa).

Positions 1–26 (MTSVLGLLKPLKKAIAAIAVLVLCIG) are cleaved as a signal peptide. The N-palmitoyl cysteine moiety is linked to residue Cys-27. The S-diacylglycerol cysteine moiety is linked to residue Cys-27.

The protein belongs to the Ycf48 family. Part of early PSII assembly complexes which includes D1 (psbA) and PsbI; not found in mature PSII. Binds to the lumenal side of PSII complexes. Interacts with YidC.

Its subcellular location is the cellular thylakoid membrane. In terms of biological role, a factor required for optimal assembly of photosystem II (PSII), acting in the early stages of PSII assembly. Also plays a role in replacement of photodamaged D1 (psbA). Assists YidC in synthesis of chlorophyll-binding proteins. This Picosynechococcus sp. (strain ATCC 27264 / PCC 7002 / PR-6) (Agmenellum quadruplicatum) protein is Photosystem II assembly lipoprotein Ycf48.